Reading from the N-terminus, the 468-residue chain is Uronate isomerase (468 aa).

The protein belongs to the metallo-dependent hydrolases superfamily. Uronate isomerase family.

The catalysed reaction is D-glucuronate = D-fructuronate. The enzyme catalyses aldehydo-D-galacturonate = keto-D-tagaturonate. Its pathway is carbohydrate metabolism; pentose and glucuronate interconversion. The chain is Uronate isomerase from Phocaeicola vulgatus (strain ATCC 8482 / DSM 1447 / JCM 5826 / CCUG 4940 / NBRC 14291 / NCTC 11154) (Bacteroides vulgatus).